Consider the following 383-residue polypeptide: Chorismate synthase (383 aa).

Residues Arg-39 and Arg-45 each contribute to the NADP(+) site. Residues 128-130 (RAS), Gly-291, 306-310 (KPIAT), and Arg-332 each bind FMN.

Belongs to the chorismate synthase family. Homotetramer. Requires FMNH2 as cofactor.

The enzyme catalyses 5-O-(1-carboxyvinyl)-3-phosphoshikimate = chorismate + phosphate. It participates in metabolic intermediate biosynthesis; chorismate biosynthesis; chorismate from D-erythrose 4-phosphate and phosphoenolpyruvate: step 7/7. Its function is as follows. Catalyzes the anti-1,4-elimination of the C-3 phosphate and the C-6 proR hydrogen from 5-enolpyruvylshikimate-3-phosphate (EPSP) to yield chorismate, which is the branch point compound that serves as the starting substrate for the three terminal pathways of aromatic amino acid biosynthesis. This reaction introduces a second double bond into the aromatic ring system. In Thermus thermophilus (strain ATCC BAA-163 / DSM 7039 / HB27), this protein is Chorismate synthase.